A 158-amino-acid polypeptide reads, in one-letter code: SH3 domain-binding glutamic acid-rich protein homolog (158 aa).

A compositionally biased stretch (basic and acidic residues) spans 40–51; the sequence is TEPGKESEKELM. The disordered stretch occupies residues 40–74; the sequence is TEPGKESEKELMQNKSTSNGGTVSDPEPRHPLPPQ. Residues 52 to 61 are compositionally biased toward polar residues; that stretch reads QNKSTSNGGT. The SH3-binding motif lies at 67–73; it reads PRHPLPP. Thr-109 is modified (phosphothreonine). The tract at residues 118-158 is disordered; it reads LKQENGDAKKEEAETEAEDKKTEAGDGDVDVKEEAAEKAEV.

Belongs to the SH3BGR family.

The chain is SH3 domain-binding glutamic acid-rich protein homolog (Sh3beta) from Drosophila melanogaster (Fruit fly).